The chain runs to 651 residues: UvrABC system protein B (651 aa).

Residues 25 to 178 (RGISCGAKEQ…CQLQERLVEL (154 aa)) enclose the Helicase ATP-binding domain. Residue 38–45 (GVTGSGKT) coordinates ATP. A Beta-hairpin motif is present at residues 91-114 (YYDYYQPEAYIPQSDVYIEKDALI). The region spanning 427 to 591 (DGQIHDVMCE…IVPRTIQKPV (165 aa)) is the Helicase C-terminal domain. The disordered stretch occupies residues 593–615 (TSLSERVGSSRKKVSRDTNTDPA). The UVR domain occupies 616–651 (NRDIVELQKEMLLCAENLDFERAVEIRNEIKRLTAP).

This sequence belongs to the UvrB family. In terms of assembly, forms a heterotetramer with UvrA during the search for lesions. Interacts with UvrC in an incision complex.

Its subcellular location is the cytoplasm. The UvrABC repair system catalyzes the recognition and processing of DNA lesions. A damage recognition complex composed of 2 UvrA and 2 UvrB subunits scans DNA for abnormalities. Upon binding of the UvrA(2)B(2) complex to a putative damaged site, the DNA wraps around one UvrB monomer. DNA wrap is dependent on ATP binding by UvrB and probably causes local melting of the DNA helix, facilitating insertion of UvrB beta-hairpin between the DNA strands. Then UvrB probes one DNA strand for the presence of a lesion. If a lesion is found the UvrA subunits dissociate and the UvrB-DNA preincision complex is formed. This complex is subsequently bound by UvrC and the second UvrB is released. If no lesion is found, the DNA wraps around the other UvrB subunit that will check the other stand for damage. This is UvrABC system protein B from Anaplasma marginale (strain Florida).